Reading from the N-terminus, the 318-residue chain is tRNA-cytidine(32) 2-sulfurtransferase (318 aa).

Residues 65 to 70 (SGGKDS) carry the PP-loop motif motif. 3 residues coordinate [4Fe-4S] cluster: C140, C143, and C231.

Belongs to the TtcA family. Homodimer. Requires Mg(2+) as cofactor. It depends on [4Fe-4S] cluster as a cofactor.

It is found in the cytoplasm. It carries out the reaction cytidine(32) in tRNA + S-sulfanyl-L-cysteinyl-[cysteine desulfurase] + AH2 + ATP = 2-thiocytidine(32) in tRNA + L-cysteinyl-[cysteine desulfurase] + A + AMP + diphosphate + H(+). Its pathway is tRNA modification. In terms of biological role, catalyzes the ATP-dependent 2-thiolation of cytidine in position 32 of tRNA, to form 2-thiocytidine (s(2)C32). The sulfur atoms are provided by the cysteine/cysteine desulfurase (IscS) system. The sequence is that of tRNA-cytidine(32) 2-sulfurtransferase from Herminiimonas arsenicoxydans.